The chain runs to 585 residues: Aspartate--tRNA ligase (585 aa).

E173 is a binding site for L-aspartate. An aspartate region spans residues 197–200 (QTLK). R219 provides a ligand contact to L-aspartate. ATP contacts are provided by residues 219–221 (RDE) and Q228. H446 is a binding site for L-aspartate. E480 contributes to the ATP binding site. R487 provides a ligand contact to L-aspartate. Position 532 to 535 (532 to 535 (GLDR)) interacts with ATP.

Belongs to the class-II aminoacyl-tRNA synthetase family. Type 1 subfamily. Homodimer.

Its subcellular location is the cytoplasm. The enzyme catalyses tRNA(Asp) + L-aspartate + ATP = L-aspartyl-tRNA(Asp) + AMP + diphosphate. In terms of biological role, catalyzes the attachment of L-aspartate to tRNA(Asp) in a two-step reaction: L-aspartate is first activated by ATP to form Asp-AMP and then transferred to the acceptor end of tRNA(Asp). The chain is Aspartate--tRNA ligase from Bacteroides fragilis (strain YCH46).